The primary structure comprises 362 residues: 3-dehydroquinate synthase (362 aa).

Residues 71–76 (DGEQYK), 105–109 (GVIGD), 129–130 (TT), Lys142, Lys151, and 169–172 (CLKT) each bind NAD(+). Residues Glu184, His247, and His264 each contribute to the Zn(2+) site.

This sequence belongs to the sugar phosphate cyclases superfamily. Dehydroquinate synthase family. NAD(+) is required as a cofactor. It depends on Co(2+) as a cofactor. Requires Zn(2+) as cofactor.

The protein resides in the cytoplasm. The catalysed reaction is 7-phospho-2-dehydro-3-deoxy-D-arabino-heptonate = 3-dehydroquinate + phosphate. It participates in metabolic intermediate biosynthesis; chorismate biosynthesis; chorismate from D-erythrose 4-phosphate and phosphoenolpyruvate: step 2/7. Catalyzes the conversion of 3-deoxy-D-arabino-heptulosonate 7-phosphate (DAHP) to dehydroquinate (DHQ). The polypeptide is 3-dehydroquinate synthase (Salmonella typhi).